A 666-amino-acid chain; its full sequence is Galactocerebrosidase (666 aa).

The signal sequence occupies residues 1 to 22 (MIYKLYFAIALCFSLCFDLCIA). A substrate-binding site is contributed by T91. An N-linked (GlcNAc...) asparagine glycan is attached at N125. Substrate-binding residues include W133 and N179. The Proton donor/acceptor role is filled by E180. Residue E256 is the Nucleophile of the active site. C269 and C376 are joined by a disulfide. A glycan (N-linked (GlcNAc...) asparagine) is linked at N361. Residue R378 coordinates substrate. N-linked (GlcNAc...) asparagine glycans are attached at residues N385, N390, N500, and N540.

It belongs to the glycosyl hydrolase 59 family.

Its subcellular location is the lysosome. It catalyses the reaction a beta-D-galactosyl-(1&lt;-&gt;1')-N-acylsphing-4-enine + H2O = an N-acylsphing-4-enine + D-galactose. It carries out the reaction beta-D-galactosyl-(1&lt;-&gt;1)-sphing-4-enine + H2O = sphing-4-enine + D-galactose. The catalysed reaction is a D-galactosylceramide + H2O = an N-acyl-sphingoid base + D-galactose. In terms of biological role, hydrolyzes the galactose ester bonds of glycolipids such as galactosylceramide and galactosylsphingosine. The chain is Galactocerebrosidase from Salmo salar (Atlantic salmon).